The chain runs to 322 residues: DNA repair and recombination protein RadA (322 aa).

105–112 (GMYGSGKT) is a binding site for ATP.

This sequence belongs to the eukaryotic RecA-like protein family.

Its function is as follows. Involved in DNA repair and in homologous recombination. Binds and assemble on single-stranded DNA to form a nucleoprotein filament. Hydrolyzes ATP in a ssDNA-dependent manner and promotes DNA strand exchange between homologous DNA molecules. The sequence is that of DNA repair and recombination protein RadA from Methanococcus maripaludis (strain C7 / ATCC BAA-1331).